The sequence spans 229 residues: UPF0758 protein Cbei_0490 (229 aa).

In terms of domain architecture, MPN spans 107-229 (KITSPKDLAS…FVSLKERGLI (123 aa)). The Zn(2+) site is built by His-178, His-180, and Asp-191. The JAMM motif motif lies at 178–191 (HNHPSGDPTPSRED).

It belongs to the UPF0758 family.

This chain is UPF0758 protein Cbei_0490, found in Clostridium beijerinckii (strain ATCC 51743 / NCIMB 8052) (Clostridium acetobutylicum).